The following is a 642-amino-acid chain: Threonine--tRNA ligase (642 aa).

The TGS domain maps to 1-61; it reads MPVVTLPDGS…DSDANLAIIT (61 aa). A catalytic region spans residues 243-534; sequence DHRKIGKQLD…LTEEYAGFFP (292 aa). C334, H385, and H511 together coordinate Zn(2+).

The protein belongs to the class-II aminoacyl-tRNA synthetase family. As to quaternary structure, homodimer. Requires Zn(2+) as cofactor.

It is found in the cytoplasm. It carries out the reaction tRNA(Thr) + L-threonine + ATP = L-threonyl-tRNA(Thr) + AMP + diphosphate + H(+). Catalyzes the attachment of threonine to tRNA(Thr) in a two-step reaction: L-threonine is first activated by ATP to form Thr-AMP and then transferred to the acceptor end of tRNA(Thr). Also edits incorrectly charged L-seryl-tRNA(Thr). This is Threonine--tRNA ligase from Photorhabdus laumondii subsp. laumondii (strain DSM 15139 / CIP 105565 / TT01) (Photorhabdus luminescens subsp. laumondii).